Consider the following 318-residue polypeptide: NADH-ubiquinone oxidoreductase chain 1 (318 aa).

The next 8 membrane-spanning stretches (helical) occupy residues 2–22, 70–90, 100–120, 147–167, 171–191, 217–237, 253–273, and 294–314; these read FMIN…FLTL, MFII…IPLP, LGIL…LWSG, AIIL…TLII, YLWL…STLA, AGPF…MNIF, ELYS…FLWI, and LPLT…LSSI.

This sequence belongs to the complex I subunit 1 family. In terms of assembly, core subunit of respiratory chain NADH dehydrogenase (Complex I) which is composed of 45 different subunits.

Its subcellular location is the mitochondrion inner membrane. The catalysed reaction is a ubiquinone + NADH + 5 H(+)(in) = a ubiquinol + NAD(+) + 4 H(+)(out). Functionally, core subunit of the mitochondrial membrane respiratory chain NADH dehydrogenase (Complex I) which catalyzes electron transfer from NADH through the respiratory chain, using ubiquinone as an electron acceptor. Essential for the catalytic activity and assembly of complex I. The polypeptide is NADH-ubiquinone oxidoreductase chain 1 (MT-ND1) (Equus caballus (Horse)).